A 122-amino-acid chain; its full sequence is Cytochrome c-556 (122 aa).

Residues methionine 11, cysteine 111, cysteine 114, and histidine 115 each contribute to the heme site. 4 residues coordinate heme c: methionine 11, cysteine 111, cysteine 114, and histidine 115.

Monomer. Binds 1 heme c group covalently per subunit.

In terms of biological role, low-spin monoheme cytochrome c. This Agrobacterium tumefaciens (strain II Chrys) protein is Cytochrome c-556.